Here is a 147-residue protein sequence, read N- to C-terminus: Large ribosomal subunit protein bL9 (147 aa).

This sequence belongs to the bacterial ribosomal protein bL9 family.

Its function is as follows. Binds to the 23S rRNA. The polypeptide is Large ribosomal subunit protein bL9 (Gemmatimonas aurantiaca (strain DSM 14586 / JCM 11422 / NBRC 100505 / T-27)).